The sequence spans 434 residues: MKRKIIAISLFLYIPLSNADNWESITKSYYTGFAISKTVESKDKDGKPVRKEVITQADLTTACNDAKASAQNVFNQIKLTLSGTWPNSQFRLVTGDTCVYNGSPGEKTESWSIRAQVEGDIQRSVPDEEPSEQTPEEICEAKPPIDGVFNNVFKGDEGGFYINYNGCEYEATGVTVCQNDGTVCSSSAWKPTGYVPESGEPSSSPLKDGDTGGTGEGGSDTGGDTGGGDTGGGSTGGDTGGSSGGGSSGGGSSGGSTGKSLTKEDVTAAIHVASPSIGDAVKDSLTEDNDQYDNQKKADEQSAKASASVSDAISDGMRGVGNFVDDFGGESSQYGTGNSEMDLSVSLAKGQLGIDREGHGSAWESFLNDGALRPSIPTGHGCTNFVMYQGSVYQIEIGCDKLNDIKSVLSWVMYCLTFWYVFQSVTSLLRKGEQ.

Positions 1–19 (MKRKIIAISLFLYIPLSNA) are cleaved as a signal peptide. The N1 stretch occupies residues 20–130 (DNWESITKSY…IQRSVPDEEP (111 aa)). Disulfide bonds link Cys63–Cys98, Cys139–Cys167, and Cys177–Cys184. A G1 (Gly-rich linker) region spans residues 89–107 (QFRLVTGDTCVYNGSPGEK). Residues 132-200 (EQTPEEICEA…PTGYVPESGE (69 aa)) are N2. Residues 191-260 (PTGYVPESGE…GSSGGSTGKS (70 aa)) are disordered. The tract at residues 209 to 258 (GDTGGTGEGGSDTGGDTGGGDTGGGSTGGDTGGSSGGGSSGGGSSGGSTG) is gly-rich linker. The span at 211–257 (TGGTGEGGSDTGGDTGGGDTGGGSTGGDTGGSSGGGSSGGGSSGGST) shows a compositional bias: gly residues. CT regions lie at residues 252 to 434 (SSGG…KGEQ) and 259 to 434 (KSLT…KGEQ). The chain crosses the membrane as a helical span at residues 408-429 (VLSWVMYCLTFWYVFQSVTSLL).

This sequence belongs to the inovirus G3P protein family. Interacts with G6P; this interaction is required for proper integration of G3P and G6P into the virion. Interacts with G8P. Interacts with the tip of the host pilus. Interacts (via N-terminus) with host TolA.

It localises to the virion. The protein localises to the host membrane. Functionally, plays essential roles both in the penetration of the viral genome into the bacterial host via pilus retraction and in the extrusion process. During the initial step of infection, G3P mediates adsorption of the phage to its primary receptor, the tip of host F-pilus. Attachment of the phage causes pilus retraction bringing the viral particle into close proximity of the host cell inner membrane. Subsequent interaction with the host entry receptors TolA (low affinity) and penetration of the viral DNA into the host cytoplasm. In the extrusion process, G3P mediates the release of the membrane-anchored virion from the cell via its C-terminal domain. This Escherichia coli (Bacteriophage IKe) protein is Attachment protein G3P (III).